Consider the following 448-residue polypeptide: MANVVENLGKLERRVTISLPKETVQKEIDARIQKLAKNVRMPGFRPGKVPLKMVAQQYAGQVEAEVLSDKIGQEFFTISRAENLRVAGQPSFAPKQEQSDDAYAFDATFEVYPEVKIGDLSTAEVERSTTTIGDAEIDRTLDILRKQRVHFHARGEAGEHGDGGADTAAQNGDRVTVDFVGKIDDVAFPGGTAEDFPFVLGEGRMLPEFEQAALGLKAGESRTFELKFPDDYHGKDVAGKTAQFTVTMKKVEWPHLPEIDAEFAKSLGIEDGDLAKMRNEIKENLEREAKRRTQAIVKNQVMDALLKISELDVPKALIEQDQQRLVEMARQDLAQRGVPNAKDAPIPAEMFAEQAERRVKLGLVLAELVKANGLEAKPEQIRAEVDEFAKSYEDPKEVVRWYYSNQQRLAEMEAFVVESNVVDFVLGKAKVTDKEVSFEALASASAQA.

A PPIase FKBP-type domain is found at 172–257 (GDRVTVDFVG…MKKVEWPHLP (86 aa)).

Belongs to the FKBP-type PPIase family. Tig subfamily.

The protein localises to the cytoplasm. The enzyme catalyses [protein]-peptidylproline (omega=180) = [protein]-peptidylproline (omega=0). Its function is as follows. Involved in protein export. Acts as a chaperone by maintaining the newly synthesized protein in an open conformation. Functions as a peptidyl-prolyl cis-trans isomerase. The protein is Trigger factor of Burkholderia multivorans (strain ATCC 17616 / 249).